The sequence spans 199 residues: Recombination protein RecR (199 aa).

The segment at 57–72 adopts a C4-type zinc-finger fold; the sequence is CSICGNITDKDPCYVC. Residues 80 to 176 form the Toprim domain; sequence TIVCVVQDSR…RVTRIAHGLP (97 aa).

The protein belongs to the RecR family.

Functionally, may play a role in DNA repair. It seems to be involved in an RecBC-independent recombinational process of DNA repair. It may act with RecF and RecO. The sequence is that of Recombination protein RecR from Exiguobacterium sibiricum (strain DSM 17290 / CCUG 55495 / CIP 109462 / JCM 13490 / 255-15).